Reading from the N-terminus, the 245-residue chain is 7-cyano-7-deazaguanine synthase (245 aa).

19 to 29 is a binding site for ATP; it reads FSGGQDSATCL. Residues Cys207, Cys222, Cys225, and Cys228 each coordinate Zn(2+).

The protein belongs to the QueC family. Zn(2+) is required as a cofactor.

It catalyses the reaction 7-carboxy-7-deazaguanine + NH4(+) + ATP = 7-cyano-7-deazaguanine + ADP + phosphate + H2O + H(+). It functions in the pathway purine metabolism; 7-cyano-7-deazaguanine biosynthesis. Functionally, catalyzes the ATP-dependent conversion of 7-carboxy-7-deazaguanine (CDG) to 7-cyano-7-deazaguanine (preQ(0)). This Gluconacetobacter diazotrophicus (strain ATCC 49037 / DSM 5601 / CCUG 37298 / CIP 103539 / LMG 7603 / PAl5) protein is 7-cyano-7-deazaguanine synthase.